A 173-amino-acid chain; its full sequence is Probable DNA-directed RNA polymerase subunit delta (173 aa).

The HTH HARE-type domain occupies 14 to 81 (NSFIDLAYMA…GEYMWGLRDW (68 aa)). Residues 113–173 (LLGEDEVEDE…DEFDDEEEEE (61 aa)) are disordered. Over residues 115–173 (GEDEVEDELDLLPSDGDEENVDTEDEEVEDELDEAGLVVEPDEEFEDEEDEFDDEEEEE) the composition is skewed to acidic residues.

It belongs to the RpoE family. RNAP is composed of a core of 2 alpha, a beta and a beta' subunits. The core is associated with a delta subunit and one of several sigma factors.

Participates in both the initiation and recycling phases of transcription. In the presence of the delta subunit, RNAP displays an increased specificity of transcription, a decreased affinity for nucleic acids, and an increased efficiency of RNA synthesis because of enhanced recycling. The protein is Probable DNA-directed RNA polymerase subunit delta of Macrococcus caseolyticus (strain JCSC5402) (Macrococcoides caseolyticum).